The sequence spans 374 residues: tRNA-specific 2-thiouridylase MnmA (374 aa).

ATP is bound by residues 13–20 (GMSGGVDS) and Met39. The interval 99–101 (NPD) is interaction with target base in tRNA. Residue Cys104 is the Nucleophile of the active site. Cys104 and Cys201 are joined by a disulfide. Gly128 serves as a coordination point for ATP. Residues 151–153 (KDQ) are interaction with tRNA. Residue Cys201 is the Cysteine persulfide intermediate of the active site. Positions 313 to 314 (RY) are interaction with tRNA.

It belongs to the MnmA/TRMU family.

The protein localises to the cytoplasm. It catalyses the reaction S-sulfanyl-L-cysteinyl-[protein] + uridine(34) in tRNA + AH2 + ATP = 2-thiouridine(34) in tRNA + L-cysteinyl-[protein] + A + AMP + diphosphate + H(+). Its function is as follows. Catalyzes the 2-thiolation of uridine at the wobble position (U34) of tRNA, leading to the formation of s(2)U34. This Streptococcus equi subsp. zooepidemicus (strain H70) protein is tRNA-specific 2-thiouridylase MnmA.